The chain runs to 330 residues: Ribosomal RNA small subunit methyltransferase C (330 aa).

This sequence belongs to the methyltransferase superfamily. RsmC family. In terms of assembly, monomer.

It localises to the cytoplasm. It catalyses the reaction guanosine(1207) in 16S rRNA + S-adenosyl-L-methionine = N(2)-methylguanosine(1207) in 16S rRNA + S-adenosyl-L-homocysteine + H(+). In terms of biological role, specifically methylates the guanine in position 1207 of 16S rRNA in the 30S particle. The protein is Ribosomal RNA small subunit methyltransferase C of Haemophilus influenzae (strain ATCC 51907 / DSM 11121 / KW20 / Rd).